The primary structure comprises 964 residues: A-type ATP synthase subunit A (964 aa).

The 127-residue stretch at 392–518 (FLGYLMANGT…LSYLFAKLGI (127 aa)) folds into the DOD-type homing endonuclease domain.

The protein belongs to the ATPase alpha/beta chains family. In terms of assembly, has multiple subunits with at least A(3), B(3), C, D, E, F, H, I and proteolipid K(x). Post-translationally, this protein undergoes a protein self splicing that involves a post-translational excision of the VDE intervening region (intein) followed by peptide ligation.

It is found in the cell membrane. It carries out the reaction ATP + H2O + 4 H(+)(in) = ADP + phosphate + 5 H(+)(out). Functionally, component of the A-type ATP synthase that produces ATP from ADP in the presence of a proton gradient across the membrane. The A chain is the catalytic subunit. This is A-type ATP synthase subunit A from Pyrococcus horikoshii (strain ATCC 700860 / DSM 12428 / JCM 9974 / NBRC 100139 / OT-3).